We begin with the raw amino-acid sequence, 302 residues long: Flavin-dependent thymidylate synthase (302 aa).

Residues 43 to 257 form the ThyX domain; it reads GFVRVIDYMG…PFAYKAFEDY (215 aa). Residues T89, 112–114, and E120 each bind FAD; that span reads RHR. DUMP-binding positions include 109-112, 120-124, and R196; these read QWIR and EYSAR. The ThyX motif motif lies at 112–122; sequence RHRTANVNEYS. FAD-binding positions include 212–214 and H218; that span reads DLH. R223 serves as a coordination point for dUMP. R223 (involved in ionization of N3 of dUMP, leading to its activation) is an active-site residue.

This sequence belongs to the thymidylate synthase ThyX family. As to quaternary structure, homotetramer. FAD is required as a cofactor.

It catalyses the reaction dUMP + (6R)-5,10-methylene-5,6,7,8-tetrahydrofolate + NADPH + H(+) = dTMP + (6S)-5,6,7,8-tetrahydrofolate + NADP(+). The protein operates within pyrimidine metabolism; dTTP biosynthesis. Its function is as follows. Catalyzes the reductive methylation of 2'-deoxyuridine-5'-monophosphate (dUMP) to 2'-deoxythymidine-5'-monophosphate (dTMP) while utilizing 5,10-methylenetetrahydrofolate (mTHF) as the methyl donor, and NADPH and FADH(2) as the reductant. This is Flavin-dependent thymidylate synthase from Ruegeria pomeroyi (strain ATCC 700808 / DSM 15171 / DSS-3) (Silicibacter pomeroyi).